A 95-amino-acid polypeptide reads, in one-letter code: Small ribosomal subunit protein bS21 (95 aa).

A disordered region spans residues 56–95 (KLARKKMQREGLLPMKPKPVFGAGPGAGRGGPAAGPRGPR). The segment covering 78–88 (AGPGAGRGGPA) has biased composition (gly residues).

This sequence belongs to the bacterial ribosomal protein bS21 family.

In Nitrobacter winogradskyi (strain ATCC 25391 / DSM 10237 / CIP 104748 / NCIMB 11846 / Nb-255), this protein is Small ribosomal subunit protein bS21.